A 162-amino-acid polypeptide reads, in one-letter code: 2-C-methyl-D-erythritol 2,4-cyclodiphosphate synthase (162 aa).

Residues aspartate 8 and histidine 10 each coordinate a divalent metal cation. Residues 8–10 (DVH) and 36–37 (HS) each bind 4-CDP-2-C-methyl-D-erythritol 2-phosphate. An a divalent metal cation-binding site is contributed by histidine 44. Residues 58 to 60 (DIG), 63 to 67 (FPDTD), 102 to 108 (AQAPKMA), 134 to 137 (TTTE), phenylalanine 141, and arginine 144 contribute to the 4-CDP-2-C-methyl-D-erythritol 2-phosphate site.

Belongs to the IspF family. Homotrimer. The cofactor is a divalent metal cation.

The catalysed reaction is 4-CDP-2-C-methyl-D-erythritol 2-phosphate = 2-C-methyl-D-erythritol 2,4-cyclic diphosphate + CMP. The protein operates within isoprenoid biosynthesis; isopentenyl diphosphate biosynthesis via DXP pathway; isopentenyl diphosphate from 1-deoxy-D-xylulose 5-phosphate: step 4/6. In terms of biological role, involved in the biosynthesis of isopentenyl diphosphate (IPP) and dimethylallyl diphosphate (DMAPP), two major building blocks of isoprenoid compounds. Catalyzes the conversion of 4-diphosphocytidyl-2-C-methyl-D-erythritol 2-phosphate (CDP-ME2P) to 2-C-methyl-D-erythritol 2,4-cyclodiphosphate (ME-CPP) with a corresponding release of cytidine 5-monophosphate (CMP). The chain is 2-C-methyl-D-erythritol 2,4-cyclodiphosphate synthase from Yersinia pseudotuberculosis serotype O:1b (strain IP 31758).